We begin with the raw amino-acid sequence, 696 residues long: uncharacterized protein (696 aa).

The GGDEF domain occupies S293–E426. The region spanning R435–N689 is the EAL domain.

This is an uncharacterized protein from Synechocystis sp. (strain ATCC 27184 / PCC 6803 / Kazusa).